The following is a 222-amino-acid chain: MSVLLPLCLIISMFTYSNAAYCLCKEGNEQVLQKAIDYACGNGADCTQIQPTGACYQPNTVKNHCDVAVNSYYQKKASSGATCDFNGAASPSTTPPSTASNCLTGSSSSGTPTTGTPTTGTPTSGTPTTGTPTTGTPTTGTPTSGTPTSGFPNTGTPNTGTNTGMPNSNGMPTSSSSSVFPGTTLGPTGSGGLGDPNAGEKLSVRTNTVVFLLTGVAAMLVI.

The first 19 residues, 1 to 19, serve as a signal peptide directing secretion; that stretch reads MSVLLPLCLIISMFTYSNA. Cysteines 22 and 83 form a disulfide. A compositionally biased stretch (low complexity) spans 88 to 187; the sequence is AASPSTTPPS…SVFPGTTLGP (100 aa). The tract at residues 88–199 is disordered; the sequence is AASPSTTPPS…SGGLGDPNAG (112 aa). Asparagine 197 is lipidated: GPI-anchor amidated asparagine. Positions 198–222 are cleaved as a propeptide — removed in mature form; it reads AGEKLSVRTNTVVFLLTGVAAMLVI.

In terms of processing, contains two additional disulfide bonds.

It is found in the cell membrane. Its subcellular location is the cell junction. The protein resides in the plasmodesma. This Arabidopsis thaliana (Mouse-ear cress) protein is PLASMODESMATA CALLOSE-BINDING PROTEIN 4 (PDCB4).